Reading from the N-terminus, the 252-residue chain is 5-oxoprolinase subunit A (252 aa).

Belongs to the LamB/PxpA family. Forms a complex composed of PxpA, PxpB and PxpC.

The catalysed reaction is 5-oxo-L-proline + ATP + 2 H2O = L-glutamate + ADP + phosphate + H(+). In terms of biological role, catalyzes the cleavage of 5-oxoproline to form L-glutamate coupled to the hydrolysis of ATP to ADP and inorganic phosphate. This is 5-oxoprolinase subunit A from Staphylococcus epidermidis (strain ATCC 35984 / DSM 28319 / BCRC 17069 / CCUG 31568 / BM 3577 / RP62A).